The following is a 369-amino-acid chain: Ubiquinone biosynthesis protein COQ4, mitochondrial (369 aa).

Residues 1 to 28 (MTSILGSARPLIQVGPKSRNASTSMSRL) constitute a mitochondrion transit peptide. The segment at 1 to 70 (MTSILGSARP…NPTNASRHPR (70 aa)) is disordered. Composition is skewed to polar residues over residues 19-33 (RNASTSMSRLPSFPT) and 47-66 (YATISPTAPRSSQRNPTNAS). 4 residues coordinate Zn(2+): His198, Asp199, His202, and Glu214. The segment at 330–369 (FSGRAKKGGKRRGWPSKILEHQKAQHQQQQQQQKVDESRN) is disordered. A compositionally biased stretch (basic residues) spans 332–343 (GRAKKGGKRRGW).

It belongs to the COQ4 family. In terms of assembly, component of a multi-subunit COQ enzyme complex, composed of at least COQ3, COQ4, COQ5, COQ6, COQ7 and COQ9. It depends on Zn(2+) as a cofactor.

Its subcellular location is the mitochondrion inner membrane. It catalyses the reaction a 4-hydroxy-3-methoxy-5-(all-trans-polyprenyl)benzoate + H(+) = a 2-methoxy-6-(all-trans-polyprenyl)phenol + CO2. Its pathway is cofactor biosynthesis; ubiquinone biosynthesis. Its function is as follows. Lyase that catalyzes the C1-decarboxylation of 4-hydroxy-3-methoxy-5-(all-trans-polyprenyl)benzoic acid into 2-methoxy-6-(all-trans-polyprenyl)phenol during ubiquinone biosynthesis. This chain is Ubiquinone biosynthesis protein COQ4, mitochondrial, found in Mycosarcoma maydis (Corn smut fungus).